Reading from the N-terminus, the 152-residue chain is Xanthine-guanine phosphoribosyltransferase (152 aa).

Residues 37-38, Arg69, and 88-96 each bind 5-phospho-alpha-D-ribose 1-diphosphate; these read RG and DDLVDTGGT. Arg69 serves as a coordination point for GMP. Asp89 contributes to the Mg(2+) binding site. Residues Asp92 and Ile135 each contribute to the guanine site. Xanthine contacts are provided by Asp92 and Ile135. Residues 92-96 and 134-135 contribute to the GMP site; these read DTGGT and WI.

Belongs to the purine/pyrimidine phosphoribosyltransferase family. XGPT subfamily. As to quaternary structure, homotetramer. Mg(2+) is required as a cofactor.

The protein resides in the cell inner membrane. It catalyses the reaction GMP + diphosphate = guanine + 5-phospho-alpha-D-ribose 1-diphosphate. The catalysed reaction is XMP + diphosphate = xanthine + 5-phospho-alpha-D-ribose 1-diphosphate. The enzyme catalyses IMP + diphosphate = hypoxanthine + 5-phospho-alpha-D-ribose 1-diphosphate. Its pathway is purine metabolism; GMP biosynthesis via salvage pathway; GMP from guanine: step 1/1. It functions in the pathway purine metabolism; XMP biosynthesis via salvage pathway; XMP from xanthine: step 1/1. Purine salvage pathway enzyme that catalyzes the transfer of the ribosyl-5-phosphate group from 5-phospho-alpha-D-ribose 1-diphosphate (PRPP) to the N9 position of the 6-oxopurines guanine and xanthine to form the corresponding ribonucleotides GMP (guanosine 5'-monophosphate) and XMP (xanthosine 5'-monophosphate), with the release of PPi. To a lesser extent, also acts on hypoxanthine. This Escherichia coli O7:K1 (strain IAI39 / ExPEC) protein is Xanthine-guanine phosphoribosyltransferase.